We begin with the raw amino-acid sequence, 505 residues long: Trans-cinnamate 4-monooxygenase (505 aa).

Residues 3 to 23 traverse the membrane as a helical segment; the sequence is LLLVEKTLLALFAAIIASIFI. (E)-cinnamate is bound by residues 213–218 and Ala-306; that span reads RSRLAQ. Heme is bound at residue Cys-447.

This sequence belongs to the cytochrome P450 family. Heme serves as cofactor.

The protein resides in the membrane. It carries out the reaction (E)-cinnamate + reduced [NADPH--hemoprotein reductase] + O2 = (E)-4-coumarate + oxidized [NADPH--hemoprotein reductase] + H2O + H(+). It functions in the pathway phenylpropanoid metabolism; trans-4-coumarate biosynthesis; trans-4-coumarate from trans-cinnamate: step 1/1. Its function is as follows. Catalyzes the first oxidative step of the phenylpropanoid pathway in higher plants by transforming trans-cinnamate into p-coumarate. The compounds formed by this pathway are essential components for lignification, pollination, and defense against ultraviolet light, predators and pathogens. This chain is Trans-cinnamate 4-monooxygenase (CYP73A12), found in Zinnia elegans (Garden zinnia).